A 333-amino-acid polypeptide reads, in one-letter code: Large ribosomal subunit protein mL39 (333 aa).

In terms of domain architecture, TGS spans 56–122 (DKIEVRYLGL…QESCTLQLLN (67 aa)). A disordered region spans residues 311–333 (SKKPSPARLPNEPFEEQQQLQLS).

The protein belongs to the mitochondrion-specific ribosomal protein mL39 family. Component of the mitochondrial ribosome large subunit (39S) which comprises a 16S rRNA and about 50 distinct proteins.

Its subcellular location is the mitochondrion. This chain is Large ribosomal subunit protein mL39 (mRpL39), found in Drosophila melanogaster (Fruit fly).